Reading from the N-terminus, the 785-residue chain is Adhesion G-protein coupled receptor G7 (785 aa).

An N-terminal signal peptide occupies residues 1–26 (MRSCRSCNVRVLVAIVCGLLTGIVLG). Over 27 to 435 (LGIWRMVIRI…KYPKSLDILS (409 aa)) the chain is Extracellular. Residues Asn-82, Asn-122, Asn-133, Asn-152, Asn-159, Asn-178, Asn-195, Asn-239, Asn-289, Asn-348, Asn-400, and Asn-408 are each glycosylated (N-linked (GlcNAc...) asparagine). The 155-residue stretch at 271 to 425 (FSVQKGSSNS…AVLMSFKKDY (155 aa)) folds into the GAIN-B domain. 2 cysteine pairs are disulfide-bonded: Cys-380-Cys-407 and Cys-395-Cys-409. A GPS region spans residues 380–425 (CVYWNFLINDWDTQGCQKTGNTTEFLRCNCSHTTNFAVLMSFKKDY). A helical membrane pass occupies residues 436 to 456 (NIGCALSIAGLALTILFQILT). The Cytoplasmic portion of the chain corresponds to 457–465 (RKIRKTSVT). The chain crosses the membrane as a helical span at residues 466-486 (WVLVSLCSSMLIFNLLFVFGI). Topologically, residues 487 to 523 (ENSNKNLKTSDSDINVKPENNKIPESDTIETPNPSCT) are extracellular. A helical membrane pass occupies residues 524–544 (AIAALLHYFLLVTFTWNGLSA). Topologically, residues 545–561 (TQLYFLLIRTMKPLPRH) are cytoplasmic. Residues 562-582 (FIIFISLVGWGVPAIIVGVTI) traverse the membrane as a helical segment. The Extracellular portion of the chain corresponds to 583–623 (GSIYALSGNKRYWELDYRQEEICWLAVPKDNDYARSPLLWS). A helical transmembrane segment spans residues 624-644 (FIIPVTIILITNITIFVIITV). Residues 645–668 (KVLWKNNQNLTSTKKVSSLKKVFS) lie on the Cytoplasmic side of the membrane. The helical transmembrane segment at 669–689 (TLSIAVVFGVTWILAYAMLIS) threads the bilayer. Over 690–694 (NDDIR) the chain is Extracellular. The chain crosses the membrane as a helical span at residues 695-715 (IVFSYIFCLFNTTQGLQIFIL). Residues 716–785 (YTVRTKVFQS…SGMTEETSLS (70 aa)) are Cytoplasmic-facing.

The protein belongs to the G-protein coupled receptor 2 family. Adhesion G-protein coupled receptor (ADGR) subfamily. In terms of tissue distribution, selectively expressed in the intestinal tissues.

The protein resides in the membrane. Functionally, orphan receptor. In Mus musculus (Mouse), this protein is Adhesion G-protein coupled receptor G7 (Adgrg7).